The primary structure comprises 114 residues: Tyrosine-protein phosphatase 11 (114 aa).

Residues 1–114 enclose the Tyrosine-protein phosphatase domain; the sequence is WRMIWEHNTR…EAKHTGPTIV (114 aa). Asp-81 lines the substrate pocket.

The protein belongs to the protein-tyrosine phosphatase family.

The catalysed reaction is O-phospho-L-tyrosyl-[protein] + H2O = L-tyrosyl-[protein] + phosphate. The chain is Tyrosine-protein phosphatase 11 (STY-11) from Styela plicata (Wrinkled sea squirt).